Consider the following 460-residue polypeptide: Angiopoietin-related protein 3 (460 aa).

A signal peptide spans 1–16 (MFTIKLLLFIVPLVIS). Residues 17 to 165 (SRIDQDNSSF…PEHPEVTSLK (149 aa)) are sufficient to inhibit LPL lipase activity. The segment at 17 to 207 (SRIDQDNSSF…EIENQLRRTS (191 aa)) is sufficient to inhibit LIPG/EL phospholipase activity. The tract at residues 32–56 (EPKSRFAMLDDVKILANGLLQLGHG) is required for inhibition of LPL lipase activity. Positions 85–210 (LSLQTSEIKE…NQLRRTSIQE (126 aa)) form a coiled coil. A glycan (N-linked (GlcNAc...) asparagine) is linked at Asn115. The O-linked (GalNAc) threonine glycan is linked to Thr226. A Fibrinogen C-terminal domain is found at 237 to 455 (VKHDGIPAEC…STKMLIHPTD (219 aa)). The cysteines at positions 246 and 274 are disulfide-linked. Asn296 and Asn357 each carry an N-linked (GlcNAc...) asparagine glycan. Residues Cys394 and Cys408 are joined by a disulfide bond.

As to quaternary structure, interacts with ANGPTL8. Interacts with ITGB3. O-glycosylated at Thr-226 by GALNT2; blocks processing and activation by proprotein convertases. Post-translationally, in part proteolytically cleaved by proprotein convertases; proposed to be involved in activation. As to expression, expressed principally in liver. Weakly expressed in kidney. Binds to adipocytes. Increased expression and colocalization with activated ITGB3 in glomeruli of patients with nephrotic syndrome showing effaced podocyte foot processes (at protein level).

Its subcellular location is the secreted. It is found in the cell projection. It localises to the lamellipodium. Functionally, acts in part as a hepatokine that is involved in regulation of lipid and glucose metabolism. Proposed to play a role in the trafficking of energy substrates to either storage or oxidative tissues in response to food intake. Has a stimulatory effect on plasma triglycerides (TG), which is achieved by suppressing plasma TG clearance via inhibition of LPL activity. The inhibition of LPL activity appears to be an indirect mechanism involving recruitment of proprotein convertases PCSK6 and FURIN to LPL leading to cleavage and dissociation of LPL from the cell surface; the function does not require ANGPTL3 proteolytic cleavage but seems to be mediated by the N-terminal domain, and is not inhibited by GPIHBP1. Can inhibit endothelial lipase, causing increased plasma levels of high density lipoprotein (HDL) cholesterol and phospholipids. Can bind to adipocytes to activate lipolysis, releasing free fatty acids and glycerol. Suppresses LPL specifically in oxidative tissues which is required to route very low density lipoprotein (VLDL)-TG to white adipose tissue (WAT) for storage in response to food; the function may involve cooperation with circulating, liver-derived ANGPTL8 and ANGPTL4 expression in WAT. Contributes to lower plasma levels of low density lipoprotein (LDL)-cholesterol by a mechanism that is independent of the canonical pathway implicating APOE and LDLR. May stimulate hypothalamic LPL activity. In vitro inhibits LPL activity; not effective on GPIHBP1-stabilized LPL. Its function is as follows. Involved in angiogenesis. Binds to endothelial cells via integrin alpha-V/beta-3 (ITGAV:ITGB3), activates FAK, MAPK and Akt signaling pathways and induces cell adhesion and cell migration. Secreted from podocytes, may modulate properties of glomerular endothelial cells involving integrin alpha-V/beta-3 and Akt signaling. May increase the motility of podocytes. May induce actin filament rearrangements in podocytes implicating integrin alpha-V/beta-3 and Rac1 activation. Binds to hematopoietic stem cells (HSC) and is involved in the regulation of HSC activity probably implicating down-regulation of IKZF1/IKAROS. This Homo sapiens (Human) protein is Angiopoietin-related protein 3 (ANGPTL3).